A 161-amino-acid chain; its full sequence is Cytochrome c-type biogenesis protein CcmE (161 aa).

Residues 1 to 8 (MNARRKKR) are Cytoplasmic-facing. Residues 9-29 (LALATALIGGVAAIASLLLYA) form a helical; Signal-anchor for type II membrane protein membrane-spanning segment. The Periplasmic portion of the chain corresponds to 30–161 (LNSNLNLFYT…EYDSTQKTGY (132 aa)). Heme contacts are provided by His131 and Tyr135.

Belongs to the CcmE/CycJ family.

The protein localises to the cell inner membrane. Its function is as follows. Heme chaperone required for the biogenesis of c-type cytochromes. Transiently binds heme delivered by CcmC and transfers the heme to apo-cytochromes in a process facilitated by CcmF and CcmH. The polypeptide is Cytochrome c-type biogenesis protein CcmE (Shewanella loihica (strain ATCC BAA-1088 / PV-4)).